We begin with the raw amino-acid sequence, 452 residues long: Peptidoglycan DL-endopeptidase CwlO (452 aa).

A signal peptide spans 1–30 (MKKKVYTFGLASILGTASLFTPFMNNTASA). Residues 28–38 (ASAETSQQKQE) show a composition bias toward polar residues. Disordered regions lie at residues 28-53 (ASAETSQQKQEIQQKRSEVNSGIESK) and 258-317 (AAAA…GSVV). 2 stretches are compositionally biased toward basic and acidic residues: residues 39–53 (IQQKRSEVNSGIESK) and 263–275 (KAKEESATAEKSD). Positions 276-317 (SGSSSSSNSGSVSKSDGSSNSGSSSSKKSSSPSRNYSSGSVV) are enriched in low complexity. One can recognise a NlpC/P60 domain in the interval 321 to 450 (GNAIEAAIST…KAFNGVVRRV (130 aa)). The active-site Nucleophile is Cys358. The active-site Proton acceptor is the His410. Residue Asn422 is part of the active site.

Belongs to the peptidase C40 family.

The protein localises to the secreted. Functionally, shows a cell wall hydrolytic DL-endopeptidase activity. The chain is Peptidoglycan DL-endopeptidase CwlO (cwlO) from Bacillus licheniformis (strain ATCC 14580 / DSM 13 / JCM 2505 / CCUG 7422 / NBRC 12200 / NCIMB 9375 / NCTC 10341 / NRRL NRS-1264 / Gibson 46).